The sequence spans 566 residues: Proline--tRNA ligase (566 aa).

This sequence belongs to the class-II aminoacyl-tRNA synthetase family. ProS type 1 subfamily. As to quaternary structure, homodimer.

The protein localises to the cytoplasm. The enzyme catalyses tRNA(Pro) + L-proline + ATP = L-prolyl-tRNA(Pro) + AMP + diphosphate. In terms of biological role, catalyzes the attachment of proline to tRNA(Pro) in a two-step reaction: proline is first activated by ATP to form Pro-AMP and then transferred to the acceptor end of tRNA(Pro). As ProRS can inadvertently accommodate and process non-cognate amino acids such as alanine and cysteine, to avoid such errors it has two additional distinct editing activities against alanine. One activity is designated as 'pretransfer' editing and involves the tRNA(Pro)-independent hydrolysis of activated Ala-AMP. The other activity is designated 'posttransfer' editing and involves deacylation of mischarged Ala-tRNA(Pro). The misacylated Cys-tRNA(Pro) is not edited by ProRS. The protein is Proline--tRNA ligase of Campylobacter concisus (strain 13826).